A 356-amino-acid polypeptide reads, in one-letter code: Chavicol O-methyltransferase (356 aa).

The S-adenosyl-L-methionine site is built by Gly202, Asp225, Asp245, Met246, and Lys259. The Proton acceptor role is filled by His263.

Belongs to the class I-like SAM-binding methyltransferase superfamily. Cation-independent O-methyltransferase family. COMT subfamily. As to quaternary structure, homodimer. Specifically expressed in the peltate glandular trichomes on the surface of the young basil leaves.

It catalyses the reaction (E)-isoeugenol + S-adenosyl-L-methionine = (E)-isomethyleugenol + S-adenosyl-L-homocysteine + H(+). It participates in aromatic compound metabolism; phenylpropanoid biosynthesis. In terms of biological role, phenylpropene O-methyltransferase that catalyzes the methylation of the para-4-hydroxyl of chavicol to methylchavicol. Can also convert eugenol to methyleugenol but with less affinity. The sequence is that of Chavicol O-methyltransferase (CVOMT1) from Ocimum basilicum (Sweet basil).